A 269-amino-acid chain; its full sequence is Putative pyruvate, phosphate dikinase regulatory protein (269 aa).

147–154 (GVSRTSKT) contributes to the ADP binding site.

It belongs to the pyruvate, phosphate/water dikinase regulatory protein family. PDRP subfamily.

The enzyme catalyses N(tele)-phospho-L-histidyl/L-threonyl-[pyruvate, phosphate dikinase] + ADP = N(tele)-phospho-L-histidyl/O-phospho-L-threonyl-[pyruvate, phosphate dikinase] + AMP + H(+). It catalyses the reaction N(tele)-phospho-L-histidyl/O-phospho-L-threonyl-[pyruvate, phosphate dikinase] + phosphate + H(+) = N(tele)-phospho-L-histidyl/L-threonyl-[pyruvate, phosphate dikinase] + diphosphate. Its function is as follows. Bifunctional serine/threonine kinase and phosphorylase involved in the regulation of the pyruvate, phosphate dikinase (PPDK) by catalyzing its phosphorylation/dephosphorylation. The chain is Putative pyruvate, phosphate dikinase regulatory protein from Geotalea uraniireducens (strain Rf4) (Geobacter uraniireducens).